The sequence spans 198 residues: Nucleoid occlusion factor SlmA (198 aa).

One can recognise an HTH tetR-type domain in the interval 9–70 (RNRREEILQA…SLIEFIEDSL (62 aa)). Residues 33–52 (TTAKLAANVGVSEAALYRHF) constitute a DNA-binding region (H-T-H motif). The stretch at 119–144 (DRLQGRINQLFERIEVQLRQVLREKK) forms a coiled coil.

It belongs to the nucleoid occlusion factor SlmA family. As to quaternary structure, homodimer. Interacts with FtsZ.

Its subcellular location is the cytoplasm. The protein localises to the nucleoid. Its function is as follows. Required for nucleoid occlusion (NO) phenomenon, which prevents Z-ring formation and cell division over the nucleoid. Acts as a DNA-associated cell division inhibitor that binds simultaneously chromosomal DNA and FtsZ, and disrupts the assembly of FtsZ polymers. SlmA-DNA-binding sequences (SBS) are dispersed on non-Ter regions of the chromosome, preventing FtsZ polymerization at these regions. The sequence is that of Nucleoid occlusion factor SlmA from Yersinia enterocolitica serotype O:8 / biotype 1B (strain NCTC 13174 / 8081).